Reading from the N-terminus, the 530-residue chain is Phosphoenolpyruvate carboxykinase (ATP) (530 aa).

3 residues coordinate substrate: arginine 58, tyrosine 195, and lysine 201. ATP is bound by residues lysine 201, histidine 220, and 236–244 (GLSGTGKTT). Positions 201 and 220 each coordinate Mn(2+). Aspartate 257 contributes to the Mn(2+) binding site. ATP contacts are provided by residues glutamate 285, arginine 321, 440–441 (RI), and threonine 446. Residue arginine 321 coordinates substrate.

The protein belongs to the phosphoenolpyruvate carboxykinase (ATP) family. It depends on Mn(2+) as a cofactor.

It localises to the cytoplasm. It catalyses the reaction oxaloacetate + ATP = phosphoenolpyruvate + ADP + CO2. The protein operates within carbohydrate biosynthesis; gluconeogenesis. Functionally, involved in the gluconeogenesis. Catalyzes the conversion of oxaloacetate (OAA) to phosphoenolpyruvate (PEP) through direct phosphoryl transfer between the nucleoside triphosphate and OAA. This is Phosphoenolpyruvate carboxykinase (ATP) from Staphylococcus epidermidis (strain ATCC 35984 / DSM 28319 / BCRC 17069 / CCUG 31568 / BM 3577 / RP62A).